The sequence spans 330 residues: Beta-ketoacyl-[acyl-carrier-protein] synthase III (330 aa).

Catalysis depends on residues C115 and H255. Residues 256–260 (QANVR) are ACP-binding. N285 is an active-site residue.

This sequence belongs to the thiolase-like superfamily. FabH family. Homodimer.

Its subcellular location is the cytoplasm. The enzyme catalyses malonyl-[ACP] + acetyl-CoA + H(+) = 3-oxobutanoyl-[ACP] + CO2 + CoA. It functions in the pathway lipid metabolism; fatty acid biosynthesis. Functionally, catalyzes the condensation reaction of fatty acid synthesis by the addition to an acyl acceptor of two carbons from malonyl-ACP. Catalyzes the first condensation reaction which initiates fatty acid synthesis and may therefore play a role in governing the total rate of fatty acid production. Possesses both acetoacetyl-ACP synthase and acetyl transacylase activities. Its substrate specificity determines the biosynthesis of branched-chain and/or straight-chain of fatty acids. The sequence is that of Beta-ketoacyl-[acyl-carrier-protein] synthase III from Symbiobacterium thermophilum (strain DSM 24528 / JCM 14929 / IAM 14863 / T).